The following is a 283-amino-acid chain: 1D-myo-inositol 2-acetamido-2-deoxy-alpha-D-glucopyranoside deacetylase (283 aa).

His15, Asp18, and His150 together coordinate Zn(2+).

Belongs to the MshB deacetylase family. Zn(2+) is required as a cofactor.

It carries out the reaction 1D-myo-inositol 2-acetamido-2-deoxy-alpha-D-glucopyranoside + H2O = 1D-myo-inositol 2-amino-2-deoxy-alpha-D-glucopyranoside + acetate. Catalyzes the deacetylation of 1D-myo-inositol 2-acetamido-2-deoxy-alpha-D-glucopyranoside (GlcNAc-Ins) in the mycothiol biosynthesis pathway. This is 1D-myo-inositol 2-acetamido-2-deoxy-alpha-D-glucopyranoside deacetylase from Actinosynnema mirum (strain ATCC 29888 / DSM 43827 / JCM 3225 / NBRC 14064 / NCIMB 13271 / NRRL B-12336 / IMRU 3971 / 101).